The following is a 165-amino-acid chain: Large ribosomal subunit protein uL10 (165 aa).

It belongs to the universal ribosomal protein uL10 family. In terms of assembly, part of the ribosomal stalk of the 50S ribosomal subunit. The N-terminus interacts with L11 and the large rRNA to form the base of the stalk. The C-terminus forms an elongated spine to which L12 dimers bind in a sequential fashion forming a multimeric L10(L12)X complex.

Forms part of the ribosomal stalk, playing a central role in the interaction of the ribosome with GTP-bound translation factors. This Deinococcus deserti (strain DSM 17065 / CIP 109153 / LMG 22923 / VCD115) protein is Large ribosomal subunit protein uL10.